A 619-amino-acid polypeptide reads, in one-letter code: Vitamin B12 transporter BtuB (619 aa).

The signal sequence occupies residues 1 to 25 (MINKKRLLLSTVSIMVISGWNQASA). The TonB box motif lies at 31-38 (DSLVVTAS). A TBDR plug domain is found at 43-157 (PISSILAPYT…IGGVINIITT (115 aa)). Residues leucine 88, serine 90, and 115 to 116 (IS) each bind cyanocob(III)alamin. The region spanning 160-619 (KLGTSLNVGI…EYYLTGSYNF (460 aa)) is the TBDR beta-barrel domain. 3 beta stranded membrane-spanning segments follow: residues 163-170 (TSLNVGIG), 174-183 (YQTYDGATQQ), and 189-200 (TVLTAAANYTYT). Ca(2+) is bound by residues aspartate 204, glutamine 216, aspartate 218, and aspartate 220. The next 2 beta stranded transmembrane spans lie at 222 to 232 (FMSKMLWLGVD) and 237 to 253 (EQVS…NRTS). Ca(2+)-binding residues include tyrosine 254 and aspartate 255. Residue alanine 256 participates in cyanocob(III)alamin binding. Aspartate 268 lines the Ca(2+) pocket. The next 17 beta stranded transmembrane spans lie at 270–284 (RELY…VRFN), 286–303 (GIYS…KDYN), 316–332 (SLND…NTFQ), 335–344 (QGIVSTGVDF), 360–376 (KTVR…QQLK), 378–388 (FILEGAIRSDK), 392–407 (AGWN…WEFI), 410–424 (YRLI…KAPT), 441–450 (ESKQWEGGIE), 456–465 (LTWRMTVYRN), 478–495 (YYNI…TGLI), 499–514 (MFQH…PRNS), 522–534 (RRAK…QLDW), 540–556 (DWGL…DKDF), 563–577 (RVKL…LTVS), 590–601 (IANLLDKDYETV), and 607–619 (PGRE…SYNF). Cyanocob(III)alamin is bound at residue serine 316. Arginine 522 lines the cyanocob(III)alamin pocket. Residues 602–619 (YGYRIPGREYYLTGSYNF) carry the TonB C-terminal box motif.

The protein belongs to the TonB-dependent receptor family. BtuB (TC 1.B.14.3.1) subfamily.

The protein localises to the cell outer membrane. Functionally, involved in the active translocation of vitamin B12 (cyanocobalamin) across the outer membrane to the periplasmic space. It derives its energy for transport by interacting with the trans-periplasmic membrane protein TonB. The polypeptide is Vitamin B12 transporter BtuB (Photorhabdus laumondii subsp. laumondii (strain DSM 15139 / CIP 105565 / TT01) (Photorhabdus luminescens subsp. laumondii)).